We begin with the raw amino-acid sequence, 252 residues long: Probable S-methyl-5'-thioinosine phosphorylase (252 aa).

Phosphate-binding positions include Thr8 and 44-45; that span reads RH. Met173 provides a ligand contact to substrate. Thr174 contacts phosphate. Residue 197–199 participates in substrate binding; that stretch reads NYA.

This sequence belongs to the PNP/MTAP phosphorylase family. MTAP subfamily. Homotrimer.

It carries out the reaction S-methyl-5'-thioinosine + phosphate = 5-(methylsulfanyl)-alpha-D-ribose 1-phosphate + hypoxanthine. The protein operates within purine metabolism; purine nucleoside salvage. In terms of biological role, catalyzes the reversible phosphorylation of S-methyl-5'-thioinosine (MTI) to hypoxanthine and 5-methylthioribose-1-phosphate. Involved in the breakdown of S-methyl-5'-thioadenosine (MTA), a major by-product of polyamine biosynthesis. Catabolism of (MTA) occurs via deamination to MTI and phosphorolysis to hypoxanthine. The protein is Probable S-methyl-5'-thioinosine phosphorylase of Methanocaldococcus jannaschii (strain ATCC 43067 / DSM 2661 / JAL-1 / JCM 10045 / NBRC 100440) (Methanococcus jannaschii).